The primary structure comprises 749 residues: Cytosolic phospholipase A2 (749 aa).

A C2 domain is found at 1–124 (MASIDPYQHI…GEKKQVPFTF (124 aa)). The phospholipid binding stretch occupies residues 1–178 (MASIDPYQHI…LRKLLGPEKT (178 aa)). D40, T41, D43, N65, D93, A94, and N95 together coordinate Ca(2+). Residues 138–740 (VCSSTDLRFS…NDVEARKLLH (603 aa)) enclose the PLA2c domain. S229 acts as the Nucleophile in catalysis. The tract at residues 417-458 (MEEEIENLKPKHILGNDSSDSDDEMQEPKGTENSKAEEEYQR) is disordered. Residues 442–457 (QEPKGTENSKAEEEYQ) are compositionally biased toward basic and acidic residues. The active-site Proton acceptor is the D549.

The protein resides in the cytoplasm. The protein localises to the cytoplasmic vesicle. The enzyme catalyses a 1,2-diacyl-sn-glycero-3-phosphocholine + H2O = a 1-acyl-sn-glycero-3-phosphocholine + a fatty acid + H(+). The catalysed reaction is a 1-acyl-sn-glycero-3-phosphocholine + H2O = sn-glycerol 3-phosphocholine + a fatty acid + H(+). With respect to regulation, stimulated by agonists such as ATP, EGF, thrombin and bradykinin as well as by cytosolic Ca(2+). Functionally, selectively hydrolyzes arachidonyl phospholipids in the sn-2 position releasing arachidonic acid. Together with its lysophospholipid activity, it is implicated in the initiation of the inflammatory response. This chain is Cytosolic phospholipase A2 (pla2g4a), found in Xenopus tropicalis (Western clawed frog).